The primary structure comprises 593 residues: Chaperone protein DnaK (593 aa).

Thr-181 bears the Phosphothreonine; by autocatalysis mark.

It belongs to the heat shock protein 70 family.

Functionally, acts as a chaperone. This is Chaperone protein DnaK from Mycoplasmoides gallisepticum (strain R(low / passage 15 / clone 2)) (Mycoplasma gallisepticum).